Reading from the N-terminus, the 58-residue chain is Potassium channel toxin Ts16 (58 aa).

The N-terminal stretch at 1–16 is a signal peptide; it reads MHSSVFILILFSLAVI. 3 disulfide bridges follow: Cys-29–Cys-51, Cys-34–Cys-47, and Cys-38–Cys-53.

In terms of tissue distribution, expressed by the venom gland.

It localises to the secreted. Its function is as follows. Blocks potassium channels. The chain is Potassium channel toxin Ts16 from Tityus serrulatus (Brazilian scorpion).